A 221-amino-acid chain; its full sequence is Protein GrpE (221 aa).

The disordered stretch occupies residues 1–43 (MFTNPFGRKKDMSDDQKKNNQPDTEADNAENIKFAADDTELRA). The segment covering 8–20 (RKKDMSDDQKKNN) has biased composition (basic and acidic residues).

It belongs to the GrpE family. As to quaternary structure, homodimer.

It localises to the cytoplasm. Functionally, participates actively in the response to hyperosmotic and heat shock by preventing the aggregation of stress-denatured proteins, in association with DnaK and GrpE. It is the nucleotide exchange factor for DnaK and may function as a thermosensor. Unfolded proteins bind initially to DnaJ; upon interaction with the DnaJ-bound protein, DnaK hydrolyzes its bound ATP, resulting in the formation of a stable complex. GrpE releases ADP from DnaK; ATP binding to DnaK triggers the release of the substrate protein, thus completing the reaction cycle. Several rounds of ATP-dependent interactions between DnaJ, DnaK and GrpE are required for fully efficient folding. The protein is Protein GrpE of Deinococcus radiodurans (strain ATCC 13939 / DSM 20539 / JCM 16871 / CCUG 27074 / LMG 4051 / NBRC 15346 / NCIMB 9279 / VKM B-1422 / R1).